A 163-amino-acid chain; its full sequence is Acetolactate synthase small subunit (163 aa).

Residues 4 to 79 (ILSVLLENES…VFKVVNLSEQ (76 aa)) form the ACT domain.

The protein belongs to the acetolactate synthase small subunit family. In terms of assembly, dimer of large and small chains.

The enzyme catalyses 2 pyruvate + H(+) = (2S)-2-acetolactate + CO2. It participates in amino-acid biosynthesis; L-isoleucine biosynthesis; L-isoleucine from 2-oxobutanoate: step 1/4. The protein operates within amino-acid biosynthesis; L-valine biosynthesis; L-valine from pyruvate: step 1/4. The protein is Acetolactate synthase small subunit (ilvH) of Haemophilus influenzae (strain ATCC 51907 / DSM 11121 / KW20 / Rd).